A 214-amino-acid chain; its full sequence is Adenylate kinase (214 aa).

10-15 (GAGKGT) lines the ATP pocket. Residues 30-59 (STGDMLRAAVKSGSELGKQAKDIMDAGKLV) are NMP. AMP-binding positions include threonine 31, arginine 36, 57-59 (KLV), 85-88 (GFPR), and glutamine 92. The interval 122–159 (GRRVHAPSGRVYHVKFNPPKVEGKDDVTGEELTTRKDD) is LID. ATP contacts are provided by residues arginine 123 and 132–133 (VY). AMP is bound by residues arginine 156 and arginine 167. Lysine 192 is modified (N6-acetyllysine). Lysine 200 provides a ligand contact to ATP.

It belongs to the adenylate kinase family. As to quaternary structure, monomer.

The protein localises to the cytoplasm. The catalysed reaction is AMP + ATP = 2 ADP. The protein operates within purine metabolism; AMP biosynthesis via salvage pathway; AMP from ADP: step 1/1. Functionally, catalyzes the reversible transfer of the terminal phosphate group between ATP and AMP. Plays an important role in cellular energy homeostasis and in adenine nucleotide metabolism. The sequence is that of Adenylate kinase from Escherichia coli O8 (strain IAI1).